Here is a 539-residue protein sequence, read N- to C-terminus: F-box only protein 31 (539 aa).

The interval glycine 11–glycine 53 is disordered. Serine 33 carries the phosphoserine modification. Position 33 is a phosphoserine; by PKB/AKT1 (serine 33). Acidic residues predominate over residues serine 33–arginine 43. Phosphothreonine is present on threonine 37. A D box motif is present at residues arginine 64–glutamate 69. The 47-residue stretch at arginine 64 to arginine 110 folds into the F-box domain. Zn(2+) is bound by residues cysteine 206, histidine 214, cysteine 230, and histidine 236. Serine 278 carries the post-translational modification Phosphoserine; by ATM. A DDL motif motif is present at residues aspartate 297–leucine 299. Basic and acidic residues predominate over residues valine 377–proline 397. Residues valine 377–phenylalanine 446 form a disordered region. Threonine 419 is modified (phosphothreonine; by MTOR). Position 480 is a phosphoserine (serine 480).

It belongs to the FBXO31 family. In terms of assembly, part of a SCF (SKP1-cullin-F-box) protein ligase complex SCF(FBXO31) composed of CUL1, SKP1, RBX1 and FBXO31. Interacts (when phosphorylated at Ser-33) with CDC20, promoting ubiquitination by the APC/C complex. Phosphorylation at Ser-278 by ATM following gamma-irradiation results in its stabilization. Phosphorylation at Thr-419 and Ser-480 in absence of stress promotes its ubiquitination and degradation by the SCF(FBXO46) complex. Phosphorylation at Ser-33 by AKT1 promotes association with CDC20 and ubiquitination by the APC/C complex. Post-translationally, ubiquitinated by the SCF(FBXO46) complex in absence of stress, promoting its degradation. Ubiquitinated by the APC/C complex following phosphorylation at Ser-33, leading to its degradation by the proteasome. Highly expressed in brain. Expressed at moderate levels in most tissues, except bone marrow.

The protein resides in the cytoplasm. Its subcellular location is the cytoskeleton. The protein localises to the microtubule organizing center. It is found in the centrosome. It functions in the pathway protein modification; protein ubiquitination. Functionally, substrate-recognition component of the SCF(FBXO31) protein ligase complex, which specifically mediates the ubiquitination of proteins amidated at their C-terminus in response to oxidative stress, leading to their degradation by the proteasome. FBXO31 specifically recognizes and binds C-terminal peptides bearing an amide: C-terminal amidation in response to oxidative stress takes place following protein fragmentation. The SCF(FBXO31) also plays a role in G1 arrest following DNA damage by mediating ubiquitination of phosphorylated cyclin-D1 (CCND1), promoting its degradation by the proteasome, resulting in G1 arrest. The SCF(FBXO31) complex is however not a major regulator of CCND1 stability during the G1/S transition. In response to genotoxic stress, the SCF(FBXO31) complex directs ubiquitination and degradation of phosphorylated MDM2, thereby promoting p53/TP53-mediated DNA damage response. SCF(FBXO31) complex is required for genomic integrity by catalyzing ubiquitination and degradation of cyclin-A (CCNA1 and/or CCNA2) during the G1 phase. In response to genotoxic stress, the SCF(FBXO31) complex directs ubiquitination and degradation of phosphorylated FBXO46 and MAP2K6. SCF(FBXO31) complex promotes ubiquitination and degradation of CDT1 during the G2 phase to prevent re-replication. The SCF(FBXO31) complex also mediates ubiquitination and degradation of DUSP6, OGT and PARD6A. The chain is F-box only protein 31 from Homo sapiens (Human).